The primary structure comprises 436 residues: 3-ketoacyl-CoA thiolase (436 aa).

The Acyl-thioester intermediate role is filled by C99. Residues H392 and C422 each act as proton acceptor in the active site.

This sequence belongs to the thiolase-like superfamily. Thiolase family. Heterotetramer of two alpha chains (FadJ) and two beta chains (FadI).

It localises to the cytoplasm. The catalysed reaction is an acyl-CoA + acetyl-CoA = a 3-oxoacyl-CoA + CoA. The protein operates within lipid metabolism; fatty acid beta-oxidation. In terms of biological role, catalyzes the final step of fatty acid oxidation in which acetyl-CoA is released and the CoA ester of a fatty acid two carbons shorter is formed. The chain is 3-ketoacyl-CoA thiolase from Enterobacter sp. (strain 638).